A 65-amino-acid polypeptide reads, in one-letter code: Large ribosomal subunit protein bL32 (65 aa).

The segment covering 1 to 18 has biased composition (basic residues); sequence MAVPKRRHSKSRTRKRRS. Residues 1–20 form a disordered region; that stretch reads MAVPKRRHSKSRTRKRRSTY.

It belongs to the bacterial ribosomal protein bL32 family.

The chain is Large ribosomal subunit protein bL32 from Salinibacter ruber (strain DSM 13855 / M31).